Reading from the N-terminus, the 475-residue chain is Putative F-box protein At3g58960 (475 aa).

In terms of domain architecture, F-box spans 1-49; the sequence is MDRISSLSNDIISNIVSFLSAKDAAVASVLSKRWQNIYTIVPNLEFDNT.

This Arabidopsis thaliana (Mouse-ear cress) protein is Putative F-box protein At3g58960.